The sequence spans 313 residues: Proline iminopeptidase (313 aa).

The AB hydrolase-1 domain occupies 35–298; the sequence is KPVVILHGGP…TPGAGHSAFE (264 aa). Catalysis depends on serine 110, which acts as the Nucleophile. Aspartate 266 is a catalytic residue. Histidine 294 acts as the Proton donor in catalysis.

This sequence belongs to the peptidase S33 family.

It is found in the cytoplasm. The catalysed reaction is Release of N-terminal proline from a peptide.. Functionally, specifically catalyzes the removal of N-terminal proline residues from peptides. The sequence is that of Proline iminopeptidase (pip) from Xylella fastidiosa (strain Temecula1 / ATCC 700964).